The chain runs to 281 residues: Pantothenate synthetase (281 aa).

M31–H38 serves as a coordination point for ATP. H38 serves as the catalytic Proton donor. Q62 contacts (R)-pantoate. A beta-alanine-binding site is contributed by Q62. Position 150-153 (G150–D153) interacts with ATP. Q156 lines the (R)-pantoate pocket. Residues V179 and M187–R190 each bind ATP.

This sequence belongs to the pantothenate synthetase family. Homodimer.

Its subcellular location is the cytoplasm. The enzyme catalyses (R)-pantoate + beta-alanine + ATP = (R)-pantothenate + AMP + diphosphate + H(+). The protein operates within cofactor biosynthesis; (R)-pantothenate biosynthesis; (R)-pantothenate from (R)-pantoate and beta-alanine: step 1/1. Functionally, catalyzes the condensation of pantoate with beta-alanine in an ATP-dependent reaction via a pantoyl-adenylate intermediate. In Xylella fastidiosa (strain M23), this protein is Pantothenate synthetase.